The primary structure comprises 417 residues: Gamma-glutamyl phosphate reductase (417 aa).

Belongs to the gamma-glutamyl phosphate reductase family.

It is found in the cytoplasm. The enzyme catalyses L-glutamate 5-semialdehyde + phosphate + NADP(+) = L-glutamyl 5-phosphate + NADPH + H(+). The protein operates within amino-acid biosynthesis; L-proline biosynthesis; L-glutamate 5-semialdehyde from L-glutamate: step 2/2. Its function is as follows. Catalyzes the NADPH-dependent reduction of L-glutamate 5-phosphate into L-glutamate 5-semialdehyde and phosphate. The product spontaneously undergoes cyclization to form 1-pyrroline-5-carboxylate. The polypeptide is Gamma-glutamyl phosphate reductase (Klebsiella pneumoniae (strain 342)).